A 215-amino-acid polypeptide reads, in one-letter code: Cytochrome b6 (215 aa).

The helical transmembrane segment at 32 to 52 (IFYCLGGITLTCFLVQIATGF) threads the bilayer. Residue C35 participates in heme c binding. The heme b site is built by H86 and H100. Helical transmembrane passes span 90–110 (ASMM…TGGF), 116–136 (LTWV…VTGY), and 186–206 (LHTF…FLMI). H187 and H202 together coordinate heme b.

Belongs to the cytochrome b family. PetB subfamily. The 4 large subunits of the cytochrome b6-f complex are cytochrome b6, subunit IV (17 kDa polypeptide, PetD), cytochrome f and the Rieske protein, while the 4 small subunits are PetG, PetL, PetM and PetN. The complex functions as a dimer. Heme b is required as a cofactor. It depends on heme c as a cofactor.

The protein resides in the plastid. It localises to the chloroplast thylakoid membrane. Component of the cytochrome b6-f complex, which mediates electron transfer between photosystem II (PSII) and photosystem I (PSI), cyclic electron flow around PSI, and state transitions. This Adiantum capillus-veneris (Maidenhair fern) protein is Cytochrome b6.